The primary structure comprises 314 residues: Methionyl-tRNA formyltransferase (314 aa).

A (6S)-5,6,7,8-tetrahydrofolate-binding site is contributed by serine 113–proline 116.

It belongs to the Fmt family.

It catalyses the reaction L-methionyl-tRNA(fMet) + (6R)-10-formyltetrahydrofolate = N-formyl-L-methionyl-tRNA(fMet) + (6S)-5,6,7,8-tetrahydrofolate + H(+). Attaches a formyl group to the free amino group of methionyl-tRNA(fMet). The formyl group appears to play a dual role in the initiator identity of N-formylmethionyl-tRNA by promoting its recognition by IF2 and preventing the misappropriation of this tRNA by the elongation apparatus. The protein is Methionyl-tRNA formyltransferase of Stutzerimonas stutzeri (strain A1501) (Pseudomonas stutzeri).